The sequence spans 157 residues: SsrA-binding protein (157 aa).

Positions 134–157 (HDKRESEKKRDWGREKGRLLRARG) are disordered. Residues 135–151 (DKRESEKKRDWGREKGR) show a composition bias toward basic and acidic residues.

The protein belongs to the SmpB family.

It is found in the cytoplasm. Functionally, required for rescue of stalled ribosomes mediated by trans-translation. Binds to transfer-messenger RNA (tmRNA), required for stable association of tmRNA with ribosomes. tmRNA and SmpB together mimic tRNA shape, replacing the anticodon stem-loop with SmpB. tmRNA is encoded by the ssrA gene; the 2 termini fold to resemble tRNA(Ala) and it encodes a 'tag peptide', a short internal open reading frame. During trans-translation Ala-aminoacylated tmRNA acts like a tRNA, entering the A-site of stalled ribosomes, displacing the stalled mRNA. The ribosome then switches to translate the ORF on the tmRNA; the nascent peptide is terminated with the 'tag peptide' encoded by the tmRNA and targeted for degradation. The ribosome is freed to recommence translation, which seems to be the essential function of trans-translation. This Nitrobacter hamburgensis (strain DSM 10229 / NCIMB 13809 / X14) protein is SsrA-binding protein.